Reading from the N-terminus, the 140-residue chain is Putative nickel-responsive regulator (140 aa).

The Ni(2+) site is built by His81, His92, His94, and Cys100.

The protein belongs to the transcriptional regulatory CopG/NikR family. It depends on Ni(2+) as a cofactor.

Transcriptional regulator. In Methanocella arvoryzae (strain DSM 22066 / NBRC 105507 / MRE50), this protein is Putative nickel-responsive regulator.